The chain runs to 1004 residues: Sodium/potassium-transporting ATPase subunit alpha-B (1004 aa).

2 helical membrane passes run 76-96 and 110-126; these read LFGG…LAYG and NLYL…VTGI. The interval 197–216 is disordered; it reads SSLTGESEPQARSPEFTNDN. 2 helical membrane passes run 272–294 and 301–329; these read FIHI…AFVL and AVVF…TLTA. Aspartate 357 acts as the 4-aspartylphosphate intermediate in catalysis. Lysine 489 lines the ATP pocket. The Mg(2+) site is built by aspartate 698 and aspartate 702. Helical transmembrane passes span 768–791, 828–855, 897–918, and 934–959; these read ISPF…ILCI, ERLI…VIMA, SSCH…LIIS, and ILNF…DKGL.

This sequence belongs to the cation transport ATPase (P-type) (TC 3.A.3) family. Type IIC subfamily. In terms of assembly, the sodium/potassium-transporting ATPase is composed of a catalytic alpha subunit, an auxiliary non-catalytic beta subunit and an additional regulatory subunit.

The protein localises to the cell membrane. It carries out the reaction K(+)(out) + Na(+)(in) + ATP + H2O = K(+)(in) + Na(+)(out) + ADP + phosphate + H(+). Functionally, this is the catalytic component of the active enzyme, which catalyzes the hydrolysis of ATP coupled with the exchange of sodium and potassium ions across the plasma membrane. This action creates the electrochemical gradient of sodium and potassium ions, providing the energy for active transport of various nutrients. This is Sodium/potassium-transporting ATPase subunit alpha-B from Artemia franciscana (Brine shrimp).